The sequence spans 396 residues: MGGGLMQLVAYGAQDIYLSGNPQITFFKVVYRRHTNFSMESIEQTFNGFPNFGKKVTCPISRNGDLIHRIYLQATVTDSIASPGLTKWAGHKLIKSVEVEIGGQRIDKHYADWLHIWNELTQTAGHWDGYKLMVNGTTASQTVAPGATTVSKTMFIPLQFWFCRNPGLALPLIALQYHEVKINLEFGDSADVMGASGASLDSAALYVDYIYLDTDERRRFAQVSHEYLIEQLQFTGDESASSKIKLNFNHPVKELIWVEKASGDGVGEYDTTYDSAKLQLNGHERFTQRTPQYFQLVQPYQHHERVPTTCVLTVDASSIETDEAVMETCTTGGINVYSFALKPEEHQPSGTCNMSRIDNATLNLQGVDTDNTVKVFAVNYNVLRVMSGMGGLAYSN.

This sequence belongs to the NCLDV major capsid protein family.

It is found in the virion. Its function is as follows. Major protein of the capsid. The protein is Major capsid protein (MCP) of Pyramimonas plurioculata (PoV01).